The primary structure comprises 342 residues: Autoinducer 2 import system permease protein LsrC (342 aa).

Residues 1 to 13 (MLKFIQNNREITA) are Periplasmic-facing. Residues 14–34 (LLAVVLLFVLPGFLDRQYLSV) form a helical membrane-spanning segment. At 35-38 (QTLT) the chain is on the cytoplasmic side. A helical transmembrane segment spans residues 39–59 (MVYSSAQILILLAMGATLVML). Residues 60–69 (TRNIDVSVGS) are Periplasmic-facing. The chain crosses the membrane as a helical span at residues 70 to 90 (ITGMCAVLLGMLLNAGYSLPV). Residues 91–92 (AC) are Cytoplasmic-facing. A helical transmembrane segment spans residues 93 to 113 (VTTLLLGLLAGFFNGVLVAWL). A topological domain (periplasmic) is located at residue K114. A helical transmembrane segment spans residues 115–135 (IPAIVATLGTLGLYRGIMLLW). Residues 136–154 (TGGKWIEGLPAELKQLSAP) lie on the Cytoplasmic side of the membrane. A helical transmembrane segment spans residues 155 to 175 (LLFGVSAIGWLTIILVAFMAW). At 176-212 (LLAKTAFGRSFYATGDNLQGARQLGVRTEAIRIVAFS) the chain is on the periplasmic side. Residues 213–233 (LNGCMAALAGIVFASQIGFIP) form a helical membrane-spanning segment. The Cytoplasmic portion of the chain corresponds to 234 to 251 (NQTGTGLEMKAIAACVLG). Residues 252 to 272 (GISLLGGSGAIIGAVLGAWFL) traverse the membrane as a helical segment. Residues 273 to 283 (TQIDSVLVLLR) lie on the Periplasmic side of the membrane. The chain crosses the membrane as a helical span at residues 284–304 (IPAWWNDFIAGLVLLAVLVFD). At 305–342 (GRLRCALERNLRRQKYARFMTPPPSVKPASSGKKREAA) the chain is on the cytoplasmic side.

Belongs to the binding-protein-dependent transport system permease family. AraH/RbsC subfamily. As to quaternary structure, the complex is composed of two ATP-binding proteins (LsrA), two transmembrane proteins (LsrC and LsrD) and a solute-binding protein (LsrB).

It localises to the cell inner membrane. In terms of biological role, part of the ABC transporter complex LsrABCD involved in autoinducer 2 (AI-2) import. Probably responsible for the translocation of the substrate across the membrane. The chain is Autoinducer 2 import system permease protein LsrC (lsrC) from Escherichia coli O9:H4 (strain HS).